A 578-amino-acid chain; its full sequence is Proline--tRNA ligase (578 aa).

This sequence belongs to the class-II aminoacyl-tRNA synthetase family. ProS type 1 subfamily. Homodimer.

The protein localises to the cytoplasm. The enzyme catalyses tRNA(Pro) + L-proline + ATP = L-prolyl-tRNA(Pro) + AMP + diphosphate. In terms of biological role, catalyzes the attachment of proline to tRNA(Pro) in a two-step reaction: proline is first activated by ATP to form Pro-AMP and then transferred to the acceptor end of tRNA(Pro). As ProRS can inadvertently accommodate and process non-cognate amino acids such as alanine and cysteine, to avoid such errors it has two additional distinct editing activities against alanine. One activity is designated as 'pretransfer' editing and involves the tRNA(Pro)-independent hydrolysis of activated Ala-AMP. The other activity is designated 'posttransfer' editing and involves deacylation of mischarged Ala-tRNA(Pro). The misacylated Cys-tRNA(Pro) is not edited by ProRS. In Burkholderia mallei (strain ATCC 23344), this protein is Proline--tRNA ligase.